A 444-amino-acid chain; its full sequence is Transcription activator AKTR-3 (444 aa).

A DNA-binding region (zn(2)-C6 fungal-type) is located at residues 16–43 (CDFCTQSKLRCNKNKPSCRRCTIQQQPC). The interval 49-89 (RRTGRPPKHPRTANDCQEANGQHGEQDPVTSTPGGSCQQQS) is disordered. The segment covering 50–59 (RTGRPPKHPR) has biased composition (basic residues). Polar residues predominate over residues 76-89 (PVTSTPGGSCQQQS).

The protein localises to the nucleus. Functionally, transcription factor that regulates the expression of the gene clusters that mediate the biosynthesis of the host-selective toxins (HSTs) AK-toxins responsible for Japanese pear black spot disease by the Japanese pear pathotype. AK-toxins are esters of 9,10-epoxy 8-hydroxy 9-methyldecatrienoic acid (EDA). On cellular level, AK-toxins affect plasma membrane of susceptible cells and cause a sudden increase in loss of K(+) after a few minutes of toxin treatment. This chain is Transcription activator AKTR-3, found in Alternaria alternata (Alternaria rot fungus).